The chain runs to 376 residues: tRNA-specific 2-thiouridylase MnmA (376 aa).

ATP-binding positions include 19 to 26 and Met45; that span reads GMSGGVDS. The segment at 105 to 107 is interaction with target base in tRNA; it reads NPD. Cys110 functions as the Nucleophile in the catalytic mechanism. Cysteines 110 and 210 form a disulfide. Gly134 serves as a coordination point for ATP. An interaction with tRNA region spans residues 160-162; that stretch reads KDQ. The active-site Cysteine persulfide intermediate is the Cys210. The interaction with tRNA stretch occupies residues 326–327; it reads RY.

The protein belongs to the MnmA/TRMU family.

It localises to the cytoplasm. It carries out the reaction S-sulfanyl-L-cysteinyl-[protein] + uridine(34) in tRNA + AH2 + ATP = 2-thiouridine(34) in tRNA + L-cysteinyl-[protein] + A + AMP + diphosphate + H(+). Functionally, catalyzes the 2-thiolation of uridine at the wobble position (U34) of tRNA, leading to the formation of s(2)U34. This Bordetella petrii (strain ATCC BAA-461 / DSM 12804 / CCUG 43448) protein is tRNA-specific 2-thiouridylase MnmA.